Consider the following 155-residue polypeptide: Small ribosomal subunit protein uS7c (155 aa).

Belongs to the universal ribosomal protein uS7 family. Part of the 30S ribosomal subunit.

It localises to the plastid. Its subcellular location is the chloroplast. Functionally, one of the primary rRNA binding proteins, it binds directly to 16S rRNA where it nucleates assembly of the head domain of the 30S subunit. This chain is Small ribosomal subunit protein uS7c (rps7), found in Cabomba caroliniana (Carolina fanwort).